The chain runs to 443 residues: Xaa-Pro dipeptidase (443 aa).

The Mn(2+) site is built by D246, D257, H339, E384, and E423.

The protein belongs to the peptidase M24B family. Bacterial-type prolidase subfamily. The cofactor is Mn(2+).

It catalyses the reaction Xaa-L-Pro dipeptide + H2O = an L-alpha-amino acid + L-proline. Its function is as follows. Splits dipeptides with a prolyl residue in the C-terminal position. This is Xaa-Pro dipeptidase from Pectobacterium carotovorum subsp. carotovorum (strain PC1).